The primary structure comprises 1402 residues: Defective in tip formation protein A (1402 aa).

Disordered regions lie at residues 1–20 (MKDI…PPQI), 37–94 (NVTT…PQIV), 109–133 (NTPS…DNDI), and 210–292 (KQSS…RRLK). Repeat copies occupy residues 12-18 (TTTVAPP) and 40-46 (TTTVQPP). Positions 12-92 (TTTVAPPQIN…TTTTTVQPPQ (81 aa)) are 4 X 7 AA repeat of T-T-T-[IV]-[AQ]-P-P. Positions 38-47 (VTTTTVQPPQ) are enriched in low complexity. The span at 48–58 (IVSPPSPPSPP) shows a compositional bias: pro residues. Low complexity predominate over residues 59 to 94 (QTTTIAPPTILPTTKTTTTTTTTTTTTTTVQPPQIV). Repeat copies occupy residues 60 to 66 (TTTIAPP) and 86 to 92 (TTVQPPQ). Residues 210-234 (KQSSQSQLQQQLSSQSLQQIQQKSK) are compositionally biased toward low complexity. The segment covering 235–253 (QPPPQQQQQQQPPPPPIPL) has biased composition (pro residues). Low complexity predominate over residues 254-279 (LPQIHQQLKPKQQQEQQQQQEQQQQQ). Residues 350-383 (QRIKSFIENHKKKKQKYREYQSEKNQQQKSNSKK) are a coiled coil. 2 disordered regions span residues 429 to 453 (DQQQ…SPMT) and 712 to 745 (NNNN…NLSN). Over residues 430 to 453 (QQQQQQQQQQSTMTTTSSSSSPMT) the composition is skewed to low complexity.

The protein localises to the cell surface. Functionally, required for correct organization of the actin cytoskeleton and cytokinesis. Also required for apical sorting of prestalk cells, a prerequisite for formation of the tip at the mound stage and subsequent formation of the fruiting body. May be required for cell adhesion. The sequence is that of Defective in tip formation protein A (dtfA) from Dictyostelium discoideum (Social amoeba).